The primary structure comprises 195 residues: MGSRASTLLRDEELEEIKKETGFSHSQITRLYSRFTSLDKGENGTLSREDFQRIPELAINPLGDRIINAFFPEGEDQVNFRGFMRTLAHFRPIEDNEKSKDVNGPEPLNSRSNKLHFAFRLYDLDKDDKISRDELLQVLRMMVGVNISDEQLGSIADRTIQEADQDGDSAISFTEFVKVLEKVDVEQKMSIRFLH.

A lipid anchor (N-myristoyl glycine) is attached at Gly2. The Necessary for association with microtubule and interaction with GAPDH motif lies at Gly2–Ser6. 4 EF-hand domains span residues Ser26–Pro61, Ile66–Asp101, Ser110–Val145, and Gln151–Glu186. Positions 123, 125, 127, 129, and 134 each coordinate Ca(2+). The short motif at Val138–Ile147 is the Nuclear export signal 1 element. Ca(2+) contacts are provided by Asp164, Asp166, Asp168, and Glu175. The short motif at Phe176–Val185 is the Nuclear export signal 2 element.

The protein belongs to the calcineurin regulatory subunit family. CHP subfamily. As to quaternary structure, monomer. Interacts with STK17B; the interaction occurs in a calcium-independent manner and induces the translocation of CHP1 from the Golgi to the nucleus. Interacts with GAPDH; the interaction is direct, occurs in a N-myristoylation-dependent manner and facilitates the ability of CHP1 to bind microtubules. Interacts with KIF1B (via the C-terminal end of the kinesin-motor domain); the interaction occurs in a calcium-dependent manner. Associates (via C-terminal domain) with microtubules; the association occurs with polymerized microtubules during the cell cycle in a myristoylation- and calcium-independent manner and is enhanced by GAPDH. Interacts with PPP3CA. Interacts with SLC9A1/NHE1 (via the cytoplasmic C-terminal domain); the interaction occurs at the plasma membrane in a calcium-dependent manner and at a domain that is critical for growth factor stimulation of the exchanger. Interacts with SLC9A3; increases SLC9A3 trafficking and activity at the plasma membrane. In terms of processing, phosphorylated; decreased phosphorylation is associated with an increase in SLC9A1/NHE1 Na(+)/H(+) exchange activity. Phosphorylation occurs in serum-dependent manner. The phosphorylation state may regulate the binding to SLC9A1/NHE1. Both N-myristoylation and calcium-mediated conformational changes are essential for its function in exocytic traffic. N-myristoylation is required for its association with microtubules and interaction with GAPDH, but not for the constitutive association to membranes.

It localises to the nucleus. It is found in the cytoplasm. The protein resides in the cytoskeleton. Its subcellular location is the endomembrane system. The protein localises to the endoplasmic reticulum-Golgi intermediate compartment. It localises to the endoplasmic reticulum. It is found in the cell membrane. The protein resides in the membrane. In terms of biological role, calcium-binding protein involved in different processes such as regulation of vesicular trafficking, plasma membrane Na(+)/H(+) exchanger and gene transcription. Involved in the constitutive exocytic membrane traffic. Mediates the association between microtubules and membrane-bound organelles of the endoplasmic reticulum and Golgi apparatus and is also required for the targeting and fusion of transcytotic vesicles (TCV) with the plasma membrane. Functions as an integral cofactor in cell pH regulation by controlling plasma membrane-type Na(+)/H(+) exchange activity. Affects the pH sensitivity of SLC9A1/NHE1 by increasing its sensitivity at acidic pH. Required for the stabilization and localization of SLC9A1/NHE1 at the plasma membrane. Inhibits serum- and GTPase-stimulated Na(+)/H(+) exchange. Plays a role as an inhibitor of ribosomal RNA transcription by repressing the nucleolar UBF1 transcriptional activity. May sequester UBF1 in the nucleoplasm and limit its translocation to the nucleolus. Associates to the ribosomal gene promoter. Acts as a negative regulator of the calcineurin/NFAT signaling pathway. Inhibits NFAT nuclear translocation and transcriptional activity by suppressing the calcium-dependent calcineurin phosphatase activity. Also negatively regulates the kinase activity of the apoptosis-induced kinase STK17B. Inhibits both STK17B auto- and substrate-phosphorylations in a calcium-dependent manner. The polypeptide is Calcineurin B homologous protein 1 (CHP1) (Bos taurus (Bovine)).